The following is a 133-amino-acid chain: ATP synthase epsilon chain (133 aa).

It belongs to the ATPase epsilon chain family. As to quaternary structure, F-type ATPases have 2 components, CF(1) - the catalytic core - and CF(0) - the membrane proton channel. CF(1) has five subunits: alpha(3), beta(3), gamma(1), delta(1), epsilon(1). CF(0) has three main subunits: a, b and c.

The protein resides in the cell membrane. In terms of biological role, produces ATP from ADP in the presence of a proton gradient across the membrane. This is ATP synthase epsilon chain from Bacillus cytotoxicus (strain DSM 22905 / CIP 110041 / 391-98 / NVH 391-98).